Consider the following 488-residue polypeptide: Protein nucleotidyltransferase YdiU (488 aa).

The ATP site is built by Gly91, Gly93, Arg94, Lys114, Asp126, Gly127, Arg177, and Arg184. Asp253 acts as the Proton acceptor in catalysis. Mg(2+)-binding residues include Asn254 and Asp263. Asp263 is an ATP binding site.

Belongs to the SELO family. The cofactor is Mg(2+). It depends on Mn(2+) as a cofactor.

The catalysed reaction is L-seryl-[protein] + ATP = 3-O-(5'-adenylyl)-L-seryl-[protein] + diphosphate. It catalyses the reaction L-threonyl-[protein] + ATP = 3-O-(5'-adenylyl)-L-threonyl-[protein] + diphosphate. The enzyme catalyses L-tyrosyl-[protein] + ATP = O-(5'-adenylyl)-L-tyrosyl-[protein] + diphosphate. It carries out the reaction L-histidyl-[protein] + UTP = N(tele)-(5'-uridylyl)-L-histidyl-[protein] + diphosphate. The catalysed reaction is L-seryl-[protein] + UTP = O-(5'-uridylyl)-L-seryl-[protein] + diphosphate. It catalyses the reaction L-tyrosyl-[protein] + UTP = O-(5'-uridylyl)-L-tyrosyl-[protein] + diphosphate. In terms of biological role, nucleotidyltransferase involved in the post-translational modification of proteins. It can catalyze the addition of adenosine monophosphate (AMP) or uridine monophosphate (UMP) to a protein, resulting in modifications known as AMPylation and UMPylation. This Bacillus cereus (strain ATCC 10987 / NRS 248) protein is Protein nucleotidyltransferase YdiU.